The chain runs to 604 residues: BTB/POZ domain-containing protein SR1IP1 (604 aa).

A BTB domain is found at 27-96; it reads SDVTVHVGEA…CYGINFDMST (70 aa). The 274-residue stretch at 201 to 474 folds into the NPH3 domain; the sequence is DWWAEDLTVL…VQVLYYEQQR (274 aa). Tyr415 carries the phosphotyrosine modification. Disordered regions lie at residues 478 to 499 and 532 to 604; these read EVTNDSDSPAPPPPQPAAVLPP and FEKE…HSIS. Residues 500–541 adopt a coiled-coil conformation; it reads KLSSYTDELSKLKRENQDLKLELLKMKMKLKEFEKESEKKTS. The segment covering 541 to 558 has biased composition (low complexity); that stretch reads SSSTISTNPSSPISTAST. A compositionally biased stretch (basic residues) spans 591-604; the sequence is GRTKPPKDRRHSIS.

It belongs to the NPH3 family. Interacts with CAMTA3 and CUL3A.

It participates in protein modification; protein ubiquitination. Acts as a substrate-specific adapter of an E3 ubiquitin-protein ligase complex (CUL3-RBX1-BTB) which mediates the ubiquitination and subsequent proteasomal degradation of target proteins. Involved in disease resistance. Acts as a substrate adapter that recruits CAMTA3/SR1 for ubiquitination and degradation during pathogen infection. Acts as a positive regulator of plant defense by removing the defense suppressor CAMTA3/SR1. This is BTB/POZ domain-containing protein SR1IP1 from Arabidopsis thaliana (Mouse-ear cress).